Here is a 540-residue protein sequence, read N- to C-terminus: Chaperonin GroEL (540 aa).

ATP-binding positions include 29-32, 86-90, G413, 476-478, and D492; these read TLGP, DGTTT, and NAA.

Belongs to the chaperonin (HSP60) family. Forms a cylinder of 14 subunits composed of two heptameric rings stacked back-to-back. Interacts with the co-chaperonin GroES.

It is found in the cytoplasm. The catalysed reaction is ATP + H2O + a folded polypeptide = ADP + phosphate + an unfolded polypeptide.. Functionally, together with its co-chaperonin GroES, plays an essential role in assisting protein folding. The GroEL-GroES system forms a nano-cage that allows encapsulation of the non-native substrate proteins and provides a physical environment optimized to promote and accelerate protein folding. The protein is Chaperonin GroEL of Streptococcus agalactiae.